The chain runs to 345 residues: MSNYWLNIYKPRGISSAQLVSIVKKILGKTKIGHAGTLDVEAEGILPFAVGEATKLIHLLIDARKTYIFTIKFGMQTNSGDCAGKVIATKDCIPSQEEAYAVCSKFIGNVTQIPPAFSALKVNGVRAYKLAREGKKVELKPRNITIYDLKCLNFDEKNATATYYTECSKGTYIRTLAEDLALSLQSLGFVIELRRTQVGIFKEENAIRIKSPDEITKNALEEKSIKIEAILDDILVLDATDSQAQQIKYGQKCLFNYEKDFRHLAKFAYREEFKGNTERSTTAYTLVREDASTGLTYKLPLEVEFGKMSVDLLWVRYKGTLLAIGSLNKSCFNSLRVFNLTQDFF.

The active-site Nucleophile is Asp-39.

Belongs to the pseudouridine synthase TruB family. Type 1 subfamily.

The enzyme catalyses uridine(55) in tRNA = pseudouridine(55) in tRNA. Functionally, responsible for synthesis of pseudouridine from uracil-55 in the psi GC loop of transfer RNAs. This chain is tRNA pseudouridine synthase B, found in Rickettsia africae (strain ESF-5).